Here is a 609-residue protein sequence, read N- to C-terminus: Isocitrate dehydrogenase kinase/phosphatase (609 aa).

Residues 325–331 and Lys-346 each bind ATP; that span reads APGIKGM. Asp-381 is a catalytic residue.

This sequence belongs to the AceK family.

The protein resides in the cytoplasm. It catalyses the reaction L-seryl-[isocitrate dehydrogenase] + ATP = O-phospho-L-seryl-[isocitrate dehydrogenase] + ADP + H(+). Functionally, bifunctional enzyme which can phosphorylate or dephosphorylate isocitrate dehydrogenase (IDH) on a specific serine residue. This is a regulatory mechanism which enables bacteria to bypass the Krebs cycle via the glyoxylate shunt in response to the source of carbon. When bacteria are grown on glucose, IDH is fully active and unphosphorylated, but when grown on acetate or ethanol, the activity of IDH declines drastically concomitant with its phosphorylation. The chain is Isocitrate dehydrogenase kinase/phosphatase from Acidovorax sp. (strain JS42).